We begin with the raw amino-acid sequence, 143 residues long: MNIKLNEEKGFTLLESLLVLSLASILLVAVFTTLPPAYDNTAVRQAASQLKNDIMLTQQTAISRQQRTKILFHKKEYQLVIGDTVIERPYATGLSIELLTLKDRLEFNEKGHPNAGGKIRVKGHAVYDITVYLGSGRVNVERK.

A propeptide spanning residues 1–10 (MNIKLNEEKG) is cleaved from the precursor. F11 is modified (N-methylphenylalanine). A helical transmembrane segment spans residues 11-31 (FTLLESLLVLSLASILLVAVF).

In terms of assembly, the transformation pili are flexible filaments, consisting mainly of the major pilin ComGC and smaller amounts of the minor pilins, including at least ComGD, ComGF and ComGG. Interacts with ComGF. Interacts with ComGG. In terms of processing, processing of ComGD in competent cells requires ComC.

It localises to the cell membrane. The protein resides in the cell surface. Required for formation of the type IV-like pilus (T4P) that plays a role in transformation. Transformation pili are dynamically extended and retracted, perhaps thereby promoting DNA uptake and transformation. Required for transformation and DNA binding. In Bacillus subtilis (strain 168), this protein is Competence protein ComGD (comGD).